We begin with the raw amino-acid sequence, 323 residues long: tRNA dimethylallyltransferase (323 aa).

ATP is bound at residue 13-20 (GPTASGKT). 15-20 (TASGKT) lines the substrate pocket. Interaction with substrate tRNA regions lie at residues 42-45 (DSAL), 166-170 (QRIQR), 251-256 (RCVGYR), and 284-291 (KRQITWLR).

Belongs to the IPP transferase family. Monomer. Mg(2+) is required as a cofactor.

It carries out the reaction adenosine(37) in tRNA + dimethylallyl diphosphate = N(6)-dimethylallyladenosine(37) in tRNA + diphosphate. Functionally, catalyzes the transfer of a dimethylallyl group onto the adenine at position 37 in tRNAs that read codons beginning with uridine, leading to the formation of N6-(dimethylallyl)adenosine (i(6)A). The polypeptide is tRNA dimethylallyltransferase (Acidovorax ebreus (strain TPSY) (Diaphorobacter sp. (strain TPSY))).